The sequence spans 525 residues: Bifunctional enzyme NanE/NanK (525 aa).

The manNAc-6-P epimerase stretch occupies residues 1–241 (MRGSPRNLCR…DAVESAAKPS (241 aa)). Residues 242 to 525 (SPVLAFDIGG…VADLAATYFS (284 aa)) form a manNAc kinase region. ATP contacts are provided by residues 246–253 (AFDIGGTK) and 372–379 (GIGGGIVL).

In the N-terminal section; belongs to the NanE family. This sequence in the C-terminal section; belongs to the ROK (NagC/XylR) family. NanK subfamily.

It carries out the reaction an N-acyl-D-glucosamine 6-phosphate = an N-acyl-D-mannosamine 6-phosphate. The catalysed reaction is an N-acyl-D-mannosamine + ATP = an N-acyl-D-mannosamine 6-phosphate + ADP + H(+). The protein operates within amino-sugar metabolism; N-acetylneuraminate degradation; D-fructose 6-phosphate from N-acetylneuraminate: step 2/5. It participates in amino-sugar metabolism; N-acetylneuraminate degradation; D-fructose 6-phosphate from N-acetylneuraminate: step 3/5. In terms of biological role, converts N-acetylmannosamine-6-phosphate (ManNAc-6-P) to N-acetylglucosamine-6-phosphate (GlcNAc-6-P). Its function is as follows. Catalyzes the phosphorylation of N-acetylmannosamine (ManNAc) to ManNAc-6-P. This is Bifunctional enzyme NanE/NanK (nanEK) from Brucella suis biovar 1 (strain 1330).